Reading from the N-terminus, the 269-residue chain is Transmembrane protein 41B (269 aa).

6 helical membrane-spanning segments follow: residues 30–50 (TSLL…FLVY), 87–107 (FYVQ…TFAI), 125–147 (LALF…LSYL), 175–195 (LINY…FINI), 203–223 (PLKV…FVAI), and 240–260 (SWNS…PALF). A VTT domain; required for its function in autophagy region spans residues 118–229 (GFLYPFPLAL…FVAIKAGTTL (112 aa)).

It belongs to the TMEM41 family.

It is found in the endoplasmic reticulum membrane. Its subcellular location is the endomembrane system. The catalysed reaction is a 1,2-diacyl-sn-glycero-3-phospho-L-serine(in) = a 1,2-diacyl-sn-glycero-3-phospho-L-serine(out). It catalyses the reaction cholesterol(in) = cholesterol(out). It carries out the reaction a 1,2-diacyl-sn-glycero-3-phosphocholine(in) = a 1,2-diacyl-sn-glycero-3-phosphocholine(out). The enzyme catalyses a 1,2-diacyl-sn-glycero-3-phosphoethanolamine(in) = a 1,2-diacyl-sn-glycero-3-phosphoethanolamine(out). In terms of biological role, phospholipid scramblase involved in lipid homeostasis and membrane dynamics processes. Has phospholipid scramblase activity toward cholesterol and phosphatidylserine, as well as phosphatidylethanolamine and phosphatidylcholine. Required for autophagosome formation: participates in early stages of autophagosome biogenesis at the endoplasmic reticulum (ER) membrane by reequilibrating the leaflets of the ER as lipids are extracted by ATG2 (ATG2A or ATG2B) to mediate autophagosome assembly. In addition to autophagy, involved in other processes in which phospholipid scramblase activity is required. Required for normal motor neuron development. The polypeptide is Transmembrane protein 41B (Gallus gallus (Chicken)).